The sequence spans 195 residues: PAP fimbrial minor pilin protein (195 aa).

The N-terminal stretch at 1-22 (MRLRFSVPLFFFGCVFVHGVFA) is a signal peptide. Cysteines 58 and 97 form a disulfide.

This sequence belongs to the fimbrial protein family.

The protein resides in the secreted. The protein localises to the fimbrium. Fimbriae (also called pili), polar filaments radiating from the surface of the bacterium to a length of 0.5-1.5 micrometers and numbering 100-300 per cell, enable bacteria to colonize the epithelium of specific host organs. In terms of biological role, papH seems to anchor the pilus to the bacterial cell. In addition the stoichiometric relationship between PapH and PapA determines the pilus length. The sequence is that of PAP fimbrial minor pilin protein (papH) from Escherichia coli.